A 554-amino-acid chain; its full sequence is Acurin A biosynthesis cluster MFS-type transporter (554 aa).

The next 5 membrane-spanning stretches (helical) occupy residues 24–44, 60–80, 96–116, 123–143, and 151–171; these read WLIF…TSII, LYIW…AIVG, LLIF…GMLL, GLGG…MVSL, and GILG…GGGF. An N-linked (GlcNAc...) asparagine glycan is attached at asparagine 174. The next 3 helical transmembrane spans lie at 179 to 199, 219 to 239, and 251 to 271; these read WIFY…VTLL, WGGI…LTWA, and IVPL…EALP. N-linked (GlcNAc...) asparagine glycosylation occurs at asparagine 283. 6 consecutive transmembrane segments (helical) span residues 289–309, 324–344, 352–372, 385–405, 417–437, and 496–516; these read LFVM…FLPI, VMLF…GILM, SFQY…TLLD, ILFG…ILAS, TWIF…AAVF, and VWQV…LVKA.

This sequence belongs to the major facilitator superfamily.

The protein resides in the membrane. In terms of biological role, MFS-type transporter that may have a role in the biosynthesis of acurin A, a highly reduced polyketide coupled to a serine via a peptide bond; either in extra- or intracellular transport. The protein is Acurin A biosynthesis cluster MFS-type transporter of Aspergillus aculeatus (strain ATCC 16872 / CBS 172.66 / WB 5094).